We begin with the raw amino-acid sequence, 417 residues long: C6 finger transcription factor traC (417 aa).

The disordered stretch occupies residues 1 to 40 (MNFSEQFTGRSEPGRKANRTSNNNTNSTTNVATVTTDDSN). Low complexity predominate over residues 19 to 37 (RTSNNNTNSTTNVATVTTD). A DNA-binding region (zn(2)-C6 fungal-type) is located at residues 44-73 (CDRCKGQKLRCIWENGSNTCRRCTRARAVC). 2 disordered regions span residues 75-94 (QPRP…KHHV) and 104-128 (WVSS…DDHD). The span at 80–94 (PFGRPRCSTKSKHHV) shows a compositional bias: basic residues. Positions 104–114 (WVSSTTQQPQE) are enriched in polar residues.

The protein resides in the nucleus. C6 finger transcription factor; part of the tra gene cluster that produces terrestric acid. The clavatol biosynthesis cluster cla and the terrestric acid cluster tra are both involved in the production of peniphenones and penilactones. This chain is C6 finger transcription factor traC, found in Penicillium crustosum (Blue mold fungus).